The following is a 44-amino-acid chain: Protein PsbN (44 aa).

The helical transmembrane segment at 6–26 threads the bilayer; the sequence is FFFTLFLWFFLLSITIYSIYI.

This sequence belongs to the PsbN family.

The protein localises to the plastid. It localises to the chloroplast thylakoid membrane. May play a role in photosystem I and II biogenesis. The polypeptide is Protein PsbN (Oedogonium cardiacum (Filamentous green alga)).